The following is a 148-amino-acid chain: Endoribonuclease YbeY (148 aa).

Zn(2+) contacts are provided by H113, H117, and H123.

It belongs to the endoribonuclease YbeY family. Requires Zn(2+) as cofactor.

The protein localises to the cytoplasm. In terms of biological role, single strand-specific metallo-endoribonuclease involved in late-stage 70S ribosome quality control and in maturation of the 3' terminus of the 16S rRNA. The polypeptide is Endoribonuclease YbeY (Borrelia duttonii (strain Ly)).